Reading from the N-terminus, the 213-residue chain is Ras-related protein Rab-4B (213 aa).

A2 carries the N-acetylalanine modification. GDP-binding residues include G18, T19, G20, K21, S22, and C23. GTP contacts are provided by G18, T19, G20, K21, S22, C23, S37, H39, and T40. S22 serves as a coordination point for Mg(2+). Positions 39-44 match the Switch 1 motif; the sequence is HTIGVE. Mg(2+) contacts are provided by T40 and D63. The Switch 2 signature appears at 65 to 74; the sequence is AGQERFRSVT. Position 66 (G66) interacts with GTP. Q67 carries the post-translational modification 5-glutamyl serotonin. Positions 121, 122, 124, 152, and 153 each coordinate GDP. GTP-binding residues include N121, K122, D124, A152, and L153. Phosphoserine is present on residues S185 and S193. Residues C211 and C213 are each lipidated (S-geranylgeranyl cysteine). C213 is modified (cysteine methyl ester).

Belongs to the small GTPase superfamily. Rab family. In terms of assembly, interacts (GTP-bound form) with RUFY1; the interaction allows endosomal tethering and fusion. Requires Mg(2+) as cofactor. Serotonylation of Gln-67 by TGM2 during activation and aggregation of platelets leads to constitutive activation of GTPase activity.

The protein resides in the cell membrane. The protein localises to the early endosome membrane. The enzyme catalyses GTP + H2O = GDP + phosphate + H(+). Its activity is regulated as follows. Regulated by guanine nucleotide exchange factors (GEFs) which promote the exchange of bound GDP for free GTP. Regulated by GTPase activating proteins (GAPs) which increase the GTP hydrolysis activity. Inhibited by GDP dissociation inhibitors (GDIs). Its function is as follows. The small GTPases Rab are key regulators of intracellular membrane trafficking, from the formation of transport vesicles to their fusion with membranes. Rabs cycle between an inactive GDP-bound form and an active GTP-bound form that is able to recruit to membranes different set of downstream effectors directly responsible for vesicle formation, movement, tethering and fusion. RAB4B mediates endosomal tethering and fusion through the interaction with RUFY1 and RAB14. Acts as a regulator of platelet alpha-granule release during activation and aggregation of platelets. This chain is Ras-related protein Rab-4B, found in Mus musculus (Mouse).